We begin with the raw amino-acid sequence, 142 residues long: Putative pre-16S rRNA nuclease (142 aa).

Belongs to the YqgF nuclease family.

The protein resides in the cytoplasm. Its function is as follows. Could be a nuclease involved in processing of the 5'-end of pre-16S rRNA. The chain is Putative pre-16S rRNA nuclease from Nitratidesulfovibrio vulgaris (strain DP4) (Desulfovibrio vulgaris).